We begin with the raw amino-acid sequence, 190 residues long: Vacuolar protein sorting-associated protein 29 (190 aa).

It belongs to the VPS29 family. Component of the retromer complex which consists of VPS29 (MAG1), VPS26 (VPS26A or VPS26B), VPS35 (VPS35A or VPS35B or VPS35C), VPS5/17 (SNX1 or SNX2A or SNX2B). Component of a retromer subcomplex consisting of VPS29 (MAG1), VPS26 (VPS26A or VPS26B), VPS35 (VPS35A or VPS35B or VPS35C).

The protein localises to the cytoplasm. Its subcellular location is the endosome membrane. The protein resides in the prevacuolar compartment membrane. It is found in the golgi apparatus. It localises to the trans-Golgi network membrane. The protein localises to the late endosome membrane. Plays a role in vesicular protein sorting. Component of the membrane-associated retromer complex which is essential in endosome-to-Golgi retrograde transport. Required for the auxin-carrier protein PIN2 sorting to the lytic vacuolar pathway and the PIN1 recycling to the plasma membrane, thus influencing auxin transport orientation. Also involved in the efficient sorting of seed storage proteins globulin 12S and albumin 2S. The VPS29-VPS26-VPS35 subcomplex may be involved in recycling of specific cargos from endosome to the plasma membrane. The sequence is that of Vacuolar protein sorting-associated protein 29 from Arabidopsis thaliana (Mouse-ear cress).